We begin with the raw amino-acid sequence, 236 residues long: Sugar fermentation stimulation protein homolog (236 aa).

This sequence belongs to the SfsA family.

This chain is Sugar fermentation stimulation protein homolog, found in Methylobacterium nodulans (strain LMG 21967 / CNCM I-2342 / ORS 2060).